We begin with the raw amino-acid sequence, 300 residues long: 4-hydroxy-tetrahydrodipicolinate synthase (300 aa).

Position 46 (Thr46) interacts with pyruvate. Residue Tyr135 is the Proton donor/acceptor of the active site. Lys163 acts as the Schiff-base intermediate with substrate in catalysis. Val205 is a pyruvate binding site.

It belongs to the DapA family. In terms of assembly, homotetramer; dimer of dimers.

The protein resides in the cytoplasm. The enzyme catalyses L-aspartate 4-semialdehyde + pyruvate = (2S,4S)-4-hydroxy-2,3,4,5-tetrahydrodipicolinate + H2O + H(+). The protein operates within amino-acid biosynthesis; L-lysine biosynthesis via DAP pathway; (S)-tetrahydrodipicolinate from L-aspartate: step 3/4. Its function is as follows. Catalyzes the condensation of (S)-aspartate-beta-semialdehyde [(S)-ASA] and pyruvate to 4-hydroxy-tetrahydrodipicolinate (HTPA). This Koribacter versatilis (strain Ellin345) protein is 4-hydroxy-tetrahydrodipicolinate synthase.